The primary structure comprises 144 residues: Cell division protein SepF (144 aa).

Positions 14 to 31 (EDDEMNEVPYTESEEQQE) are enriched in acidic residues. A disordered region spans residues 14-41 (EDDEMNEVPYTESEEQQEEIPQTQKNER).

Belongs to the SepF family. Homodimer. Interacts with FtsZ.

The protein resides in the cytoplasm. In terms of biological role, cell division protein that is part of the divisome complex and is recruited early to the Z-ring. Probably stimulates Z-ring formation, perhaps through the cross-linking of FtsZ protofilaments. Its function overlaps with FtsA. This Lactobacillus johnsonii (strain CNCM I-12250 / La1 / NCC 533) protein is Cell division protein SepF.